A 245-amino-acid chain; its full sequence is tRNA1(Val) (adenine(37)-N6)-methyltransferase (245 aa).

The protein belongs to the methyltransferase superfamily. tRNA (adenine-N(6)-)-methyltransferase family.

It is found in the cytoplasm. It carries out the reaction adenosine(37) in tRNA1(Val) + S-adenosyl-L-methionine = N(6)-methyladenosine(37) in tRNA1(Val) + S-adenosyl-L-homocysteine + H(+). Its function is as follows. Specifically methylates the adenine in position 37 of tRNA(1)(Val) (anticodon cmo5UAC). The sequence is that of tRNA1(Val) (adenine(37)-N6)-methyltransferase from Escherichia coli O157:H7.